Reading from the N-terminus, the 334-residue chain is Ribosomal RNA small subunit methyltransferase H (334 aa).

S-adenosyl-L-methionine is bound by residues 53-55, D72, F99, D122, and H129; that span reads GGH.

It belongs to the methyltransferase superfamily. RsmH family.

It is found in the cytoplasm. The catalysed reaction is cytidine(1402) in 16S rRNA + S-adenosyl-L-methionine = N(4)-methylcytidine(1402) in 16S rRNA + S-adenosyl-L-homocysteine + H(+). Functionally, specifically methylates the N4 position of cytidine in position 1402 (C1402) of 16S rRNA. The protein is Ribosomal RNA small subunit methyltransferase H of Leptospira interrogans serogroup Icterohaemorrhagiae serovar copenhageni (strain Fiocruz L1-130).